A 436-amino-acid chain; its full sequence is Cold sensitive U2 snRNA suppressor 1 (436 aa).

Residues M1–S10 are compositionally biased toward basic residues. A disordered region spans residues M1–N22. Positions N12–N22 are enriched in low complexity. Phosphothreonine occurs at positions 104 and 112. Position 114 is a phosphoserine (S114). The interval E374–K436 is disordered. The segment covering G389–E408 has biased composition (basic and acidic residues).

It to mammalian SAP 145. Some, to C.elegans ZK632.11. In terms of assembly, belongs to the CWC complex (or CEF1-associated complex), a spliceosome sub-complex reminiscent of a late-stage spliceosome composed of the U2, U5 and U6 snRNAs and at least BUD13, BUD31, BRR2, CDC40, CEF1, CLF1, CUS1, CWC2, CWC15, CWC21, CWC22, CWC23, CWC24, CWC25, CWC27, ECM2, HSH155, IST3, ISY1, LEA1, MSL1, NTC20, PRP8, PRP9, PRP11, PRP19, PRP21, PRP22, PRP45, PRP46, SLU7, SMB1, SMD1, SMD2, SMD3, SMX2, SMX3, SNT309, SNU114, SPP2, SYF1, SYF2, RSE1 and YJU2. Interacts with RDS3.

The protein localises to the nucleus. In terms of biological role, essential splicing protein required for U2 snRNP binding to pre-mRNA during spliceosome assembly. The polypeptide is Cold sensitive U2 snRNA suppressor 1 (CUS1) (Saccharomyces cerevisiae (strain ATCC 204508 / S288c) (Baker's yeast)).